Here is a 31-residue protein sequence, read N- to C-terminus: Cytochrome b6-f complex subunit 6 (31 aa).

The chain crosses the membrane as a helical span at residues 4–26; it reads ITSYFGFLLAASTITSALLIGLS.

This sequence belongs to the PetL family. As to quaternary structure, the 4 large subunits of the cytochrome b6-f complex are cytochrome b6, subunit IV (17 kDa polypeptide, PetD), cytochrome f and the Rieske protein, while the 4 small subunits are PetG, PetL, PetM and PetN. The complex functions as a dimer.

It localises to the plastid. It is found in the chloroplast thylakoid membrane. Functionally, component of the cytochrome b6-f complex, which mediates electron transfer between photosystem II (PSII) and photosystem I (PSI), cyclic electron flow around PSI, and state transitions. PetL is important for photoautotrophic growth as well as for electron transfer efficiency and stability of the cytochrome b6-f complex. This chain is Cytochrome b6-f complex subunit 6, found in Chloranthus spicatus (Chulantree).